The following is an 831-amino-acid chain: MSMTTCECRSPQEQRLYDKIEGREDRFRKTHPRVFRLLERFEGQKPRIDIERALYFTQSMQETEGQPLVLRWAKALMHIARNMTVYVQEDQLLLGRAGCDGRYGILYPELDGDFLDIAVRDLPTRKTSPATITPEDARRVVEEIAPYWKGKTYHEALNAALPAEVHKLTYDDPEGLISRFIVNETSSFRSSIQWVHDYEKILKRGFNSIKKEAREKLAALDPLSAKDDREKRPFLEAVMIVCDAIVLWAKRHAVLAREMAEKESDPVRKAELLRMAENAEHVPGEPARDFWEACQSQWFTQMFSRIEQKTGTTISNGRMDQYFQPYYKQDREAGKITEAQAMELLECMWVGMAEFIDMYISPTGGAFNEGYAHWEAVTVGGQTPDGRDASNDLTYLILKSKREFPLHYPDLAARIHSRAPERYLWDVAETIKYGSGFPKLINDEEIVPLYVSKGATFEEALDYAVSGCTEARMPNRDTYTSGGAYINFAAAVEMVLRNGRMKKYGDQKLGVETGDPRSFTTWDQFWNAYVEQHLLFLKTAFTQQYIINKLRAEHFAQPMGSAMHDLCMKHCIDLHQEQIPEGINLGYFEYMGLGTVVDSLAAVKKLVFEEKKLSMDKLIAAIDADFEGYEDVRALLRSAPCYGNNDEYADAIGRDIDRISVEYGNKYSMSDLGIHNDVRYVPFTSHVPFGKVVSATPNGRTDGFPLSDGSSASHGADVNGPTAVLLSNCTTKNMGLRDRAARMLNIKFTPKCVEGEQGTEKLVSFIRTFCDLKLWHVQFNVVNKGTLVAAQKDPQKYRNLIVRIAGYSAYFVDLSPDLQNDLIARTEHDVM.

The PFL domain occupies 32-701; it reads PRVFRLLERF…VVSATPNGRT (670 aa). Residues Arg189, Gln193, 468–470, and Arg679 contribute to the 2-hydroxyethane-1-sulfonate site; that span reads CTE. The active-site Cysteine radical intermediate is the Cys468. Glu470 functions as the Proton acceptor in the catalytic mechanism. The region spanning 708–831 is the Glycine radical domain; that stretch reads DGSSASHGAD…LIARTEHDVM (124 aa). Gly806 carries the post-translational modification Glycine radical.

This sequence belongs to the glycyl radical enzyme (GRE) family. In terms of assembly, homodimer. In terms of processing, requires the activating protein IslB to generate the key active site glycyl radical on Gly-806 that is involved in catalysis.

The enzyme catalyses 2-hydroxyethane-1-sulfonate = acetaldehyde + sulfite + H(+). It functions in the pathway organosulfur degradation; alkanesulfonate degradation. Involved in an anaerobic respiration pathway that converts the sulfonate isethionate (2-hydroxyethanesulfonate) to ammonia, acetate and sulfide. Catalyzes the radical-mediated C-S bond cleavage of isethionate (2-hydroxyethanesulfonate) to form sulfite and acetaldehyde. The sequence is that of Isethionate sulfite-lyase from Desulfovibrio desulfuricans (strain ATCC 27774 / DSM 6949 / MB).